The primary structure comprises 341 residues: uncharacterized protein (341 aa).

This sequence belongs to the Gfo/Idh/MocA family.

This is an uncharacterized protein from Bacillus subtilis (strain 168).